We begin with the raw amino-acid sequence, 469 residues long: 3-isopropylmalate dehydratase large subunit (469 aa).

3 residues coordinate [4Fe-4S] cluster: C350, C410, and C413.

Belongs to the aconitase/IPM isomerase family. LeuC type 1 subfamily. Heterodimer of LeuC and LeuD. [4Fe-4S] cluster is required as a cofactor.

It catalyses the reaction (2R,3S)-3-isopropylmalate = (2S)-2-isopropylmalate. The protein operates within amino-acid biosynthesis; L-leucine biosynthesis; L-leucine from 3-methyl-2-oxobutanoate: step 2/4. Catalyzes the isomerization between 2-isopropylmalate and 3-isopropylmalate, via the formation of 2-isopropylmaleate. The polypeptide is 3-isopropylmalate dehydratase large subunit (Mesorhizobium japonicum (strain LMG 29417 / CECT 9101 / MAFF 303099) (Mesorhizobium loti (strain MAFF 303099))).